Consider the following 570-residue polypeptide: Periplasmic trehalase (570 aa).

A signal peptide spans 1–34 (MITPALRHSGTLSFAIKLTVASTLLTFASLSAHA). Substrate is bound by residues Arg-157, 164–165 (WD), Asn-201, 210–212 (RSQ), 282–284 (RPE), and Gly-315. Active-site proton donor/acceptor residues include Asp-317 and Glu-501. Glu-516 lines the substrate pocket. Positions 542–570 (KPCDSVPATRPAAPGASQPAPQKQVETTP) are disordered. Residues 552 to 570 (PAAPGASQPAPQKQVETTP) are compositionally biased toward low complexity.

The protein belongs to the glycosyl hydrolase 37 family. In terms of assembly, monomer.

Its subcellular location is the periplasm. It carries out the reaction alpha,alpha-trehalose + H2O = alpha-D-glucose + beta-D-glucose. In terms of biological role, provides the cells with the ability to utilize trehalose at high osmolarity by splitting it into glucose molecules that can subsequently be taken up by the phosphotransferase-mediated uptake system. The chain is Periplasmic trehalase from Citrobacter koseri (strain ATCC BAA-895 / CDC 4225-83 / SGSC4696).